The chain runs to 369 residues: Anhydro-N-acetylmuramic acid kinase (369 aa).

12-19 (GTSMDGVD) contacts ATP.

The protein belongs to the anhydro-N-acetylmuramic acid kinase family.

The catalysed reaction is 1,6-anhydro-N-acetyl-beta-muramate + ATP + H2O = N-acetyl-D-muramate 6-phosphate + ADP + H(+). It participates in amino-sugar metabolism; 1,6-anhydro-N-acetylmuramate degradation. It functions in the pathway cell wall biogenesis; peptidoglycan recycling. In terms of biological role, catalyzes the specific phosphorylation of 1,6-anhydro-N-acetylmuramic acid (anhMurNAc) with the simultaneous cleavage of the 1,6-anhydro ring, generating MurNAc-6-P. Is required for the utilization of anhMurNAc either imported from the medium or derived from its own cell wall murein, and thus plays a role in cell wall recycling. The sequence is that of Anhydro-N-acetylmuramic acid kinase from Shewanella pealeana (strain ATCC 700345 / ANG-SQ1).